Consider the following 372-residue polypeptide: Enoyl-[acyl-carrier-protein] reductase, mitochondrial (372 aa).

A mitochondrion-targeting transit peptide spans 1 to 18; that stretch reads MSFFKTAVRRFSSTSITR. The active-site Proton donor is Y72. NADP(+) is bound by residues N157, 183 to 186, 206 to 208, 279 to 282, 304 to 306, and K365; these read NSMV, RNR, FGGM, and FWV.

This sequence belongs to the zinc-containing alcohol dehydrogenase family. Quinone oxidoreductase subfamily. As to quaternary structure, homodimer.

The protein resides in the mitochondrion matrix. It catalyses the reaction a 2,3-saturated acyl-[ACP] + NADP(+) = a (2E)-enoyl-[ACP] + NADPH + H(+). Functionally, catalyzes the NADPH-dependent reduction of trans-2-enoyl thioesters in mitochondrial fatty acid synthesis (fatty acid synthesis type II). Fatty acid chain elongation in mitochondria uses acyl carrier protein (ACP) as an acyl group carrier, but the enzyme accepts both ACP and CoA thioesters as substrates in vitro. Required for respiration and the maintenance of the mitochondrial compartment. This Schizosaccharomyces pombe (strain 972 / ATCC 24843) (Fission yeast) protein is Enoyl-[acyl-carrier-protein] reductase, mitochondrial (etr1).